Reading from the N-terminus, the 432-residue chain is Mitochondrial distribution and morphology protein 12 (432 aa).

The 432-residue stretch at 1–432 (MSIEVDWRAA…VFPSFWTFLI (432 aa)) folds into the SMP-LTD domain. Disordered regions lie at residues 182-273 (WTDP…PRMR) and 354-377 (QQEA…PKRQ). Residues 214 to 234 (TSNPTSRPSTSSTLPSHPSAS) are compositionally biased toward low complexity. 2 stretches are compositionally biased toward basic and acidic residues: residues 243–253 (TGKEHGSLAED) and 355–364 (QEARGQDDRP).

The protein belongs to the MDM12 family. In terms of assembly, component of the ER-mitochondria encounter structure (ERMES) or MDM complex, composed of mmm1, mdm10, mdm12 and mdm34. A mmm1 homodimer associates with one molecule of mdm12 on each side in a pairwise head-to-tail manner, and the SMP-LTD domains of mmm1 and mdm12 generate a continuous hydrophobic tunnel for phospholipid trafficking.

Its subcellular location is the mitochondrion outer membrane. It is found in the endoplasmic reticulum membrane. Functionally, component of the ERMES/MDM complex, which serves as a molecular tether to connect the endoplasmic reticulum (ER) and mitochondria. Components of this complex are involved in the control of mitochondrial shape and protein biogenesis, and function in nonvesicular lipid trafficking between the ER and mitochondria. Mdm12 is required for the interaction of the ER-resident membrane protein mmm1 and the outer mitochondrial membrane-resident beta-barrel protein mdm10. The mdm12-mmm1 subcomplex functions in the major beta-barrel assembly pathway that is responsible for biogenesis of all mitochondrial outer membrane beta-barrel proteins, and acts in a late step after the SAM complex. The mdm10-mdm12-mmm1 subcomplex further acts in the TOM40-specific pathway after the action of the mdm12-mmm1 complex. Essential for establishing and maintaining the structure of mitochondria and maintenance of mtDNA nucleoids. The protein is Mitochondrial distribution and morphology protein 12 of Aspergillus oryzae (strain ATCC 42149 / RIB 40) (Yellow koji mold).